The following is a 281-amino-acid chain: Bifunctional protein FolD (281 aa).

NADP(+)-binding positions include 164–166, isoleucine 189, and isoleucine 230; that span reads GAS.

The protein belongs to the tetrahydrofolate dehydrogenase/cyclohydrolase family. As to quaternary structure, homodimer.

The catalysed reaction is (6R)-5,10-methylene-5,6,7,8-tetrahydrofolate + NADP(+) = (6R)-5,10-methenyltetrahydrofolate + NADPH. The enzyme catalyses (6R)-5,10-methenyltetrahydrofolate + H2O = (6R)-10-formyltetrahydrofolate + H(+). It functions in the pathway one-carbon metabolism; tetrahydrofolate interconversion. Its function is as follows. Catalyzes the oxidation of 5,10-methylenetetrahydrofolate to 5,10-methenyltetrahydrofolate and then the hydrolysis of 5,10-methenyltetrahydrofolate to 10-formyltetrahydrofolate. This chain is Bifunctional protein FolD, found in Sulfurovum sp. (strain NBC37-1).